A 339-amino-acid chain; its full sequence is UPF0324 membrane protein SpyM3_0740 (339 aa).

9 consecutive transmembrane segments (helical) span residues 7–24 (KLPG…AWYL), 28–50 (FPII…FYHH), 57–79 (GISF…GLNL), 84–106 (AVGM…VAYG), 118–140 (ATLV…APVI), 150–172 (AISV…GQLL), 256–275 (FILF…SLGV), 290–307 (FIVM…LVKL), and 314–336 (AILL…QLSL).

Belongs to the UPF0324 family.

The protein resides in the cell membrane. This is UPF0324 membrane protein SpyM3_0740 from Streptococcus pyogenes serotype M3 (strain ATCC BAA-595 / MGAS315).